The primary structure comprises 61 residues: Photosystem II reaction center protein Z (61 aa).

Transmembrane regions (helical) follow at residues 5–25 (LTAL…VALA) and 38–58 (TKGF…DGVA).

This sequence belongs to the PsbZ family. PSII is composed of 1 copy each of membrane proteins PsbA, PsbB, PsbC, PsbD, PsbE, PsbF, PsbH, PsbI, PsbJ, PsbK, PsbL, PsbM, PsbT, PsbX, PsbY, PsbZ, Psb30/Ycf12, at least 3 peripheral proteins of the oxygen-evolving complex and a large number of cofactors. It forms dimeric complexes.

The protein resides in the plastid. It is found in the chloroplast thylakoid membrane. Functionally, may control the interaction of photosystem II (PSII) cores with the light-harvesting antenna, regulates electron flow through the 2 photosystem reaction centers. PSII is a light-driven water plastoquinone oxidoreductase, using light energy to abstract electrons from H(2)O, generating a proton gradient subsequently used for ATP formation. This is Photosystem II reaction center protein Z from Phaeodactylum tricornutum (strain CCAP 1055/1).